A 146-amino-acid chain; its full sequence is Acidic phospholipase A2 CM-II (146 aa).

The first 21 residues, 1–21 (MNPAHLLILAAVCVSPLGAFS), serve as a signal peptide directing secretion. A propeptide spanning residues 22–27 (NRPMPL) is cleaved from the precursor. Cystine bridges form between C38-C98, C53-C145, C55-C71, C70-C126, C77-C119, C87-C112, and C105-C117. Ca(2+) is bound by residues Y54, G56, and G58. The active site involves H74. D75 contributes to the Ca(2+) binding site. Residue D120 is part of the active site.

The protein belongs to the phospholipase A2 family. Group I subfamily. D49 sub-subfamily. The cofactor is Ca(2+). Expressed by the venom gland.

The protein resides in the secreted. The enzyme catalyses a 1,2-diacyl-sn-glycero-3-phosphocholine + H2O = a 1-acyl-sn-glycero-3-phosphocholine + a fatty acid + H(+). Its function is as follows. PLA2 catalyzes the calcium-dependent hydrolysis of the 2-acyl groups in 3-sn-phosphoglycerides. Is able to suppress the acetylcholine (ACh)-evoked current mediated by alpha-7 (CHRNA7)-similar nAChRs in L.stagnalis neurons (IC(50)=37 nM) and to compete with alpha-bungarotoxin for binding to muscle- and alpha-7 neuronal nAChR types, as well as to AChBPs. In inhibition of alpha-bungarotoxin binding, this toxin is similarly active against T.californica nAChR (IC(50)=1.2 uM), human alpha-7 nAChR (IC(50)=3.2 uM), and L.stagnalis AChBP (IC(50)=1.0 uM), whereas it is not active against A.californica AChBP (IC(50)&gt;100 uM). This is Acidic phospholipase A2 CM-II from Naja kaouthia (Monocled cobra).